A 262-amino-acid chain; its full sequence is Indole-3-glycerol phosphate synthase (262 aa).

It belongs to the TrpC family.

It catalyses the reaction 1-(2-carboxyphenylamino)-1-deoxy-D-ribulose 5-phosphate + H(+) = (1S,2R)-1-C-(indol-3-yl)glycerol 3-phosphate + CO2 + H2O. Its pathway is amino-acid biosynthesis; L-tryptophan biosynthesis; L-tryptophan from chorismate: step 4/5. This is Indole-3-glycerol phosphate synthase from Dechloromonas aromatica (strain RCB).